Here is a 500-residue protein sequence, read N- to C-terminus: NAD(P)H-quinone oxidoreductase chain 4, chloroplastic (500 aa).

The next 14 helical transmembrane spans lie at 4–24 (FPWLTIIVVFPILTGSLIFLL), 37–57 (LCICILELLLTTYTFCYHFQL), 87–107 (IGPILLTGFITTLATLAAWPV), 111–131 (AQLFHFLMLAMYSGQIGSFSS), 134–154 (LLLFFLMWEFELIPVYLLLSM), 167–187 (FILYTAGGSIFLLIGVLGIGL), 208–228 (ALEVIFYVGFLIAFAVKLPII), 242–262 (HYSTCMLLAGILLKMGAYGLV), 272–292 (AHCLFSPGLIIVGAIQIIYAA), 305–325 (IAYSSISHMGFIIIGIGSLSD), 330–350 (GAILQIISHGFIGAALFFLAG), 386–406 (LALPGLSGFVAELLVFFGIIT), 416–436 (ILIAFLMAIGMILTPIYSLSM), and 462–482 (LFVSISLLLPIIGIGIYPDFV).

It belongs to the complex I subunit 4 family.

It is found in the plastid. Its subcellular location is the chloroplast thylakoid membrane. It carries out the reaction a plastoquinone + NADH + (n+1) H(+)(in) = a plastoquinol + NAD(+) + n H(+)(out). The catalysed reaction is a plastoquinone + NADPH + (n+1) H(+)(in) = a plastoquinol + NADP(+) + n H(+)(out). This chain is NAD(P)H-quinone oxidoreductase chain 4, chloroplastic, found in Oenothera parviflora (Small-flowered evening primrose).